The primary structure comprises 170 residues: E1B protein, small T-antigen (170 aa).

Belongs to the adenoviridae E1B 19 kDa protein family.

The polypeptide is E1B protein, small T-antigen (Canine adenovirus serotype 2 (CAdV-2)).